Here is a 305-residue protein sequence, read N- to C-terminus: Spermatogenesis-associated protein 4 (305 aa).

Positions 49–155 (SRLSRSVLRW…EEVYTLLTHR (107 aa)) constitute a Calponin-homology (CH) domain.

Highly expressed in testis, the expression is observed precisely in seminiferous tubules.

The protein localises to the nucleus. In terms of biological role, may play a role in apoptosis regulation. The sequence is that of Spermatogenesis-associated protein 4 (SPATA4) from Homo sapiens (Human).